Here is a 67-residue protein sequence, read N- to C-terminus: Alpha-actitoxin-Ms11a-3 (67 aa).

The signal sequence occupies residues 1–24 (MASKIFFVLAVFLVMSAVLPESFA). 3 disulfides stabilise this stretch: Cys-26-Cys-41, Cys-33-Cys-46, and Cys-40-Cys-61. The residue at position 66 (Lys-66) is a Lysine amide.

It localises to the secreted. Its subcellular location is the nematocyst. Its function is as follows. Alpha-toxins act on postsynaptic membranes, they bind to the nicotinic acetylcholine receptors (nAChR) and thus inhibit them. This toxin shows inhibition against mouse alpha-1-beta-1-delta-epsilon (CHRNA1-CHRNB1-CHRND-CHRNE) (IC(50)=1215 nM), rat alpha-3-beta-4/CHRNA3-CHRNB4 (IC(50)=5.173 uM), rat alpha-7/CHRNA7 (IC(50)=4.786 uM), human alpha-7/CHRNA7 (IC(50)=8.869 uM), and rat alpha-9-alpha-10/CHRNA9-CHRNA10 (IC(50)=202 nM). Also competes with alpha-bungarotoxin for binding to orthosteric sites on muscle-type T.carlifornicus (IC(50)=256 nM) and human alpha-7/CHRNA7 nAChRs (IC(50)=19.81 uM). The polypeptide is Alpha-actitoxin-Ms11a-3 (Metridium senile (Brown sea anemone)).